Reading from the N-terminus, the 418-residue chain is MVEVEEVSNKMQAQMRLHPAAAAEEEDADLPLPALFDKASHLHSLASSSSLDQEGIRKGVDLLRRCDEMVSKLGLFSSNETKDDVSTANLKYLLVPYYLGEMTERVAQEDRIPVLKASQDHLKEFISICEALELISEDELELSRQKQPDTMANRRAQKVARFKRQKAAETKLLEIKERKERRRRSLRAAALSAPIEAGEEDAFEDDGEEEREAWLATISLALCKAFDLLDMLKKEEEMLLAVKERQAKDGNAFAREMLDERTKKAEAWHHNAANRAPYSKPADPITCATFAQDVIEGRASVSQAHEHKHQPLIFGPASLVGGGLTSERERMAAQVFQPSYRLPTMSIEEAGLREMKMMEKWQERTAKMIQESNSAWHKDGSRSAQEDEDAEEEKARAWDDWKDDNPRGAGNKKLTPCG.

The tract at residues K367–G418 is disordered. Composition is skewed to basic and acidic residues over residues W376–Q385 and E393–P406.

Belongs to the IGBP1/TAP42 family.

Its function is as follows. Involved in the regulation of the TOR signaling pathway. Seems to act as a regulator of PP2A catalytic activity. The protein is PP2A regulatory subunit TAP46 of Oryza sativa subsp. japonica (Rice).